The chain runs to 1038 residues: Protein argonaute 1D (1038 aa).

2 disordered regions span residues 1 to 58 and 110 to 134; these read MGSR…GAAP and APHE…PRSL. 2 stretches are compositionally biased toward gly residues: residues 18–29 and 43–52; these read RGGGRGGGGRGR and GHGGRGGAGY. A compositionally biased stretch (low complexity) spans 115-134; sequence PANVSSPEAASPEASSPRSL. The region spanning 380–493 is the PAZ domain; that stretch reads PVIDFVIQLL…LPMEVCKIVE (114 aa). The 322-residue stretch at 669–990 folds into the Piwi domain; it reads LLIGLLPDNN…AAFRARFYME (322 aa). A disordered region spans residues 992–1021; that stretch reads DSSDSGSMASGRGGGSSTSRSTRAAGGGAV.

The protein belongs to the argonaute family. Ago subfamily.

Functionally, probably involved in the RNA silencing pathway. May bind to short RNAs such as microRNAs (miRNAs) or short interfering RNAs (siRNAs), and represses the translation of mRNAs which are complementary to them. In Oryza sativa subsp. japonica (Rice), this protein is Protein argonaute 1D (AGO1D).